Here is a 678-residue protein sequence, read N- to C-terminus: Penicillin-binding protein activator LpoA (678 aa).

The signal sequence occupies residues 1–26 (MVPSTFSRLKAARCLPVVLAALIFAG). Cysteine 27 carries the N-palmitoyl cysteine lipid modification. Cysteine 27 carries S-diacylglycerol cysteine lipidation. Disordered regions lie at residues 302–340 (DVAE…PVSA) and 496–528 (ALTG…DDQF). Composition is skewed to low complexity over residues 330-340 (QPAAQPVPVSA) and 513-528 (TTNN…DDQF).

The protein belongs to the LpoA family. Interacts with PBP1a.

The protein localises to the cell outer membrane. Regulator of peptidoglycan synthesis that is essential for the function of penicillin-binding protein 1A (PBP1a). The sequence is that of Penicillin-binding protein activator LpoA from Shigella sonnei (strain Ss046).